Reading from the N-terminus, the 856-residue chain is Subtilisin-like protease SBT2.2 (856 aa).

The signal sequence occupies residues 1-21; sequence MRRVLMVNFGVLLLFCFGVLS. The propeptide at 22–159 is activation peptide; sequence NSFGQDNGGD…IVLDFSVRTA (138 aa). N-linked (GlcNAc...) asparagine glycosylation is found at Asn35 and Asn85. In terms of domain architecture, Inhibitor I9 spans 40–159; sequence VYIVTLRQAS…IVLDFSVRTA (120 aa). Positions 164 to 709 constitute a Peptidase S8 domain; it reads PQFMGLPKGA…NGFVNATAAL (546 aa). Asp193 acts as the Charge relay system in catalysis. N-linked (GlcNAc...) asparagine glycosylation is found at Asn204 and Asn255. Catalysis depends on His269, which acts as the Charge relay system. N-linked (GlcNAc...) asparagine glycosylation is found at Asn412, Asn441, Asn495, Asn540, and Asn568. One can recognise a PA domain in the interval 432–528; sequence MISALDALKN…MDMPGIIIPS (97 aa). Ser634 functions as the Charge relay system in the catalytic mechanism. Asn704, Asn730, Asn738, Asn748, Asn767, Asn782, and Asn823 each carry an N-linked (GlcNAc...) asparagine glycan.

This sequence belongs to the peptidase S8 family.

The protein localises to the secreted. In Arabidopsis thaliana (Mouse-ear cress), this protein is Subtilisin-like protease SBT2.2.